Consider the following 203-residue polypeptide: Tic20 family protein Ycf60 (203 aa).

Transmembrane regions (helical) follow at residues 2–22 (IRLF…RLAI), 51–71 (IIPY…YVLP), 84–104 (ILLP…VTFF), 131–151 (ILLF…PIEF), and 153–173 (ISFI…STIT).

The protein belongs to the Tic20 family.

Its subcellular location is the plastid. The protein localises to the chloroplast membrane. This chain is Tic20 family protein Ycf60 (ycf60), found in Porphyra purpurea (Red seaweed).